We begin with the raw amino-acid sequence, 448 residues long: Trigger factor (448 aa).

One can recognise a PPIase FKBP-type domain in the interval 172–257 (GDRVTVDFVG…MKKIEWPHLP (86 aa)).

The protein belongs to the FKBP-type PPIase family. Tig subfamily.

It is found in the cytoplasm. It catalyses the reaction [protein]-peptidylproline (omega=180) = [protein]-peptidylproline (omega=0). Involved in protein export. Acts as a chaperone by maintaining the newly synthesized protein in an open conformation. Functions as a peptidyl-prolyl cis-trans isomerase. The polypeptide is Trigger factor (Burkholderia cenocepacia (strain ATCC BAA-245 / DSM 16553 / LMG 16656 / NCTC 13227 / J2315 / CF5610) (Burkholderia cepacia (strain J2315))).